A 265-amino-acid polypeptide reads, in one-letter code: 3-methyl-2-oxobutanoate hydroxymethyltransferase (265 aa).

2 residues coordinate Mg(2+): D45 and D84. 3-methyl-2-oxobutanoate contacts are provided by residues 45 to 46 (DS), D84, and K112. A Mg(2+)-binding site is contributed by E114. The Proton acceptor role is filled by E181.

The protein belongs to the PanB family. As to quaternary structure, homodecamer; pentamer of dimers. Requires Mg(2+) as cofactor.

The protein resides in the cytoplasm. It catalyses the reaction 3-methyl-2-oxobutanoate + (6R)-5,10-methylene-5,6,7,8-tetrahydrofolate + H2O = 2-dehydropantoate + (6S)-5,6,7,8-tetrahydrofolate. The protein operates within cofactor biosynthesis; (R)-pantothenate biosynthesis; (R)-pantoate from 3-methyl-2-oxobutanoate: step 1/2. Catalyzes the reversible reaction in which hydroxymethyl group from 5,10-methylenetetrahydrofolate is transferred onto alpha-ketoisovalerate to form ketopantoate. This Wigglesworthia glossinidia brevipalpis protein is 3-methyl-2-oxobutanoate hydroxymethyltransferase.